A 134-amino-acid chain; its full sequence is Large-conductance mechanosensitive channel (134 aa).

A run of 2 helical transmembrane segments spans residues 16-36 (VIDL…VTAL) and 81-101 (GDFI…FIIV).

This sequence belongs to the MscL family. In terms of assembly, homopentamer.

The protein resides in the cell inner membrane. Functionally, channel that opens in response to stretch forces in the membrane lipid bilayer. May participate in the regulation of osmotic pressure changes within the cell. The protein is Large-conductance mechanosensitive channel of Xylella fastidiosa (strain Temecula1 / ATCC 700964).